Here is a 220-residue protein sequence, read N- to C-terminus: CASP-like protein 4B1 (220 aa).

Topologically, residues 1–74 (MAMVTTEAAA…RWRREDMLDK (74 aa)) are cytoplasmic. The tract at residues 13 to 56 (TTAATAAAEKPQDVEKPDYAPYNGASTTADGGTGARARRGDGGG) is disordered. The chain crosses the membrane as a helical span at residues 75 to 95 (SPLALHAAAAIFAFVALVLVA). Residues 96 to 109 (SNQHGDWMQFDRYQ) lie on the Extracellular side of the membrane. Residues 110-127 (EYRYLLAIASLALLYSLA) form a helical membrane-spanning segment. Topologically, residues 128-152 (QAARHAHRMRGGVDPVSSASARLLD) are cytoplasmic. Residues 153-173 (FVGDQVVAYLLMSALSAAVPI) traverse the membrane as a helical segment. At 174 to 188 (TNRMRSAVVNNFTDA) the chain is on the extracellular side. The N-linked (GlcNAc...) asparagine glycan is linked to Asn184. A helical membrane pass occupies residues 189 to 209 (TAAAISMAFFSFVALALSAVV). Over 210–220 (SGYKLSKQTYM) the chain is Cytoplasmic.

Belongs to the Casparian strip membrane proteins (CASP) family. In terms of assembly, homodimer and heterodimers.

The protein resides in the cell membrane. The sequence is that of CASP-like protein 4B1 from Sorghum bicolor (Sorghum).